We begin with the raw amino-acid sequence, 308 residues long: 4-diphosphocytidyl-2-C-methyl-D-erythritol kinase (308 aa).

The active site involves lysine 23. Residue 108 to 118 participates in ATP binding; that stretch reads PVAAGIGGGSA. Residue aspartate 150 is part of the active site.

The protein belongs to the GHMP kinase family. IspE subfamily.

The enzyme catalyses 4-CDP-2-C-methyl-D-erythritol + ATP = 4-CDP-2-C-methyl-D-erythritol 2-phosphate + ADP + H(+). The protein operates within isoprenoid biosynthesis; isopentenyl diphosphate biosynthesis via DXP pathway; isopentenyl diphosphate from 1-deoxy-D-xylulose 5-phosphate: step 3/6. In terms of biological role, catalyzes the phosphorylation of the position 2 hydroxy group of 4-diphosphocytidyl-2C-methyl-D-erythritol. This chain is 4-diphosphocytidyl-2-C-methyl-D-erythritol kinase, found in Nitrobacter winogradskyi (strain ATCC 25391 / DSM 10237 / CIP 104748 / NCIMB 11846 / Nb-255).